A 355-amino-acid chain; its full sequence is Putative GPI-anchor transamidase (355 aa).

The first 24 residues, M1 to A24, serve as a signal peptide directing secretion. Catalysis depends on residues H165 and C207.

This sequence belongs to the peptidase C13 family.

The protein operates within glycolipid biosynthesis; glycosylphosphatidylinositol-anchor biosynthesis. In terms of biological role, mediates GPI anchoring in the endoplasmic reticulum, by replacing a protein's C-terminal GPI attachment signal peptide with a pre-assembled GPI. During this transamidation reaction, the GPI transamidase forms a carbonyl intermediate with the substrate protein. In Drosophila melanogaster (Fruit fly), this protein is Putative GPI-anchor transamidase.